A 147-amino-acid chain; its full sequence is Nucleoside diphosphate kinase (147 aa).

Residues K9, R85, T91, R102, and N112 each coordinate ATP. The Pros-phosphohistidine intermediate role is filled by H115.

It belongs to the NDK family. It depends on Mg(2+) as a cofactor.

It carries out the reaction a 2'-deoxyribonucleoside 5'-diphosphate + ATP = a 2'-deoxyribonucleoside 5'-triphosphate + ADP. The enzyme catalyses a ribonucleoside 5'-diphosphate + ATP = a ribonucleoside 5'-triphosphate + ADP. Functionally, major role in the synthesis of nucleoside triphosphates other than ATP. The ATP gamma phosphate is transferred to the NDP beta phosphate via a ping-pong mechanism, using a phosphorylated active-site intermediate. This Encephalitozoon cuniculi (strain GB-M1) (Microsporidian parasite) protein is Nucleoside diphosphate kinase (NDK1).